We begin with the raw amino-acid sequence, 99 residues long: CLAVATA3/ESR (CLE)-related protein 17 (99 aa).

An N-terminal signal peptide occupies residues 1-21 (MTHVLVRRQGQGKKRRWDVNM). Residues 77-89 (LSRDDIYGDDKRV) show a composition bias toward basic and acidic residues. A disordered region spans residues 77–99 (LSRDDIYGDDKRVVHTGPNPLHN). Proline 94 carries the hydroxyproline modification. Residue proline 94 is glycosylated (O-linked (Ara...) hydroxyproline).

Belongs to the CLV3/ESR signal peptide family. Post-translationally, the O-glycosylation (arabinosylation) of the hydroxyproline Pro-94 enhances binding affinity of the CLE17p peptide for its receptor. Mostly expressed in seedlings, roots, flowers, stems and apex, and, to a lower extent, in leaves and siliques.

It is found in the secreted. Its subcellular location is the extracellular space. In terms of biological role, extracellular signal peptide that regulates cell fate. Represses root apical meristem maintenance. Regulates the transition of protophloem cells from proliferation to differentiation, thus impinging on postembryonic growth capacity of the root meristem; this signaling pathway requires CRN and CLV2. The polypeptide is CLAVATA3/ESR (CLE)-related protein 17 (Arabidopsis thaliana (Mouse-ear cress)).